We begin with the raw amino-acid sequence, 854 residues long: Lysine-specific demethylase 3 (854 aa).

The tract at residues 64-88 (QRVQQEEESLGQVPPLTEEEQQRHD) is disordered. A JmjC domain is found at 601 to 806 (LRTGNLNIAS…HCYHLTHEFR (206 aa)). Fe cation-binding residues include His643, Asp645, and His774.

It belongs to the JHDM2-like histone demethylase family. Requires Fe(2+) as cofactor. As to expression, expressed in neurons close to the dorsal lateral neurons involved in circadian rhythm.

Its subcellular location is the nucleus. It localises to the cytoplasm. It carries out the reaction N(6),N(6)-dimethyl-L-lysyl(9)-[histone H3] + 2 2-oxoglutarate + 2 O2 = L-lysyl(9)-[histone H3] + 2 formaldehyde + 2 succinate + 2 CO2. In terms of biological role, histone demethylase that specifically demethylates 'Lys-10' of histone H3 (H3K9), thereby playing a central role in histone code. Demethylation of Lys residue generates formaldehyde and succinate. Probably involved in regulation of chromatin structure, promoting expansion of euchromatin. Negatively regulates rhino-dependent piRNA production capacity of several genomic regions; may help define the frontiers of piRNA clusters by regulating histone methylation levels. May be involved in regulation of behavior and circadian rhythms. The chain is Lysine-specific demethylase 3 from Drosophila melanogaster (Fruit fly).